A 232-amino-acid polypeptide reads, in one-letter code: Ubiquinone biosynthesis O-methyltransferase (232 aa).

R36, G55, D76, and M120 together coordinate S-adenosyl-L-methionine.

It belongs to the methyltransferase superfamily. UbiG/COQ3 family.

It catalyses the reaction a 3-demethylubiquinol + S-adenosyl-L-methionine = a ubiquinol + S-adenosyl-L-homocysteine + H(+). It carries out the reaction a 3-(all-trans-polyprenyl)benzene-1,2-diol + S-adenosyl-L-methionine = a 2-methoxy-6-(all-trans-polyprenyl)phenol + S-adenosyl-L-homocysteine + H(+). It functions in the pathway cofactor biosynthesis; ubiquinone biosynthesis. In terms of biological role, O-methyltransferase that catalyzes the 2 O-methylation steps in the ubiquinone biosynthetic pathway. The polypeptide is Ubiquinone biosynthesis O-methyltransferase (Paraburkholderia phytofirmans (strain DSM 17436 / LMG 22146 / PsJN) (Burkholderia phytofirmans)).